The sequence spans 115 residues: Non-specific lipid-transfer protein 4.2 (115 aa).

Positions 1–25 are cleaved as a signal peptide; it reads MARAAATQLVLVAMVAAMLIVATDA. Disulfide bonds link Cys-29–Cys-77, Cys-39–Cys-54, Cys-55–Cys-97, and Cys-75–Cys-111.

It belongs to the plant LTP family.

Its function is as follows. Plant non-specific lipid-transfer proteins transfer phospholipids as well as galactolipids across membranes. May play a role in wax or cutin deposition in the cell walls of expanding epidermal cells and certain secretory tissues. This is Non-specific lipid-transfer protein 4.2 (LTP4.2) from Hordeum vulgare (Barley).